We begin with the raw amino-acid sequence, 398 residues long: Diaminopropionate ammonia-lyase (398 aa).

K77 bears the N6-(pyridoxal phosphate)lysine mark.

Belongs to the diaminopropionate ammonia-lyase family. As to quaternary structure, homodimer. It depends on pyridoxal 5'-phosphate as a cofactor.

It catalyses the reaction (S)-2,3-diaminopropanoate + H2O + H(+) = pyruvate + 2 NH4(+). The catalysed reaction is (R)-2,3-diaminopropanoate + H2O + H(+) = pyruvate + 2 NH4(+). Functionally, catalyzes the alpha,beta-elimination reaction of both L- and D-alpha,beta-diaminopropionate (DAP) to form pyruvate and ammonia. The D-isomer of serine is degraded to pyruvate, though very poorly; other amino acids (L-serine, D- and L-threonine, D- and L-beta-Cl-alanine) are not substrates. The sequence is that of Diaminopropionate ammonia-lyase (ygeX) from Escherichia coli O157:H7.